The sequence spans 330 residues: Putative pentatricopeptide repeat-containing protein At5g36300 (330 aa).

PPR repeat units lie at residues 10-44 (SLSMYNSWIRYFCRTGETNEAMSLLAEIHSLGSRP), 45-75 (DPLSYVSFIETLASLRRTLEADALFHEVVRF), 83-113 (VRLYNALVSRYLRKEVSWRVVNEMKKRKFRL), 114-148 (NSFVYGKIIRIYRDNGMWKKALGIVEEIREIGLPM), 149-179 (DVEIYNSVIDTFGKYGELDEELQVLEKLQRS), 185-215 (NIRTWNSLIRWHCHHGAVDMALELFTMIFED), 231-265 (SANLFCTLANAYAQQGLCKQTVKVLKMMENEGIEP), 266-296 (NLIMLNVLINAFGTAGKHMEALSIYHHIKET), and 302-330 (DVVTYSTLMKAFTRAKKYEMVCSFYLVTL).

It belongs to the PPR family. P subfamily.

This is Putative pentatricopeptide repeat-containing protein At5g36300 from Arabidopsis thaliana (Mouse-ear cress).